A 641-amino-acid polypeptide reads, in one-letter code: 1-deoxy-D-xylulose-5-phosphate synthase (641 aa).

Residues His-80 and 121 to 123 each bind thiamine diphosphate; that span reads GHS. Mg(2+) is bound at residue Asp-152. Thiamine diphosphate is bound by residues 153–154, Asn-181, Tyr-290, and Glu-372; that span reads GS. Position 181 (Asn-181) interacts with Mg(2+).

This sequence belongs to the transketolase family. DXPS subfamily. Homodimer. The cofactor is Mg(2+). Thiamine diphosphate serves as cofactor.

The enzyme catalyses D-glyceraldehyde 3-phosphate + pyruvate + H(+) = 1-deoxy-D-xylulose 5-phosphate + CO2. The protein operates within metabolic intermediate biosynthesis; 1-deoxy-D-xylulose 5-phosphate biosynthesis; 1-deoxy-D-xylulose 5-phosphate from D-glyceraldehyde 3-phosphate and pyruvate: step 1/1. Functionally, catalyzes the acyloin condensation reaction between C atoms 2 and 3 of pyruvate and glyceraldehyde 3-phosphate to yield 1-deoxy-D-xylulose-5-phosphate (DXP). In Rhodobacter capsulatus (Rhodopseudomonas capsulata), this protein is 1-deoxy-D-xylulose-5-phosphate synthase.